The primary structure comprises 349 residues: Twinfilin-2-B (349 aa).

2 consecutive ADF-H domains span residues 4–139 (QTGI…KHVS) and 177–313 (GLSF…DEVH). Positions 321–349 (QAFAKPKGPAGKRGQKRLIKGPGENGEDS) are disordered.

The protein belongs to the actin-binding proteins ADF family. Twinfilin subfamily. As to quaternary structure, interacts with G-actin; ADP-actin form and capping protein (CP).

The protein resides in the cytoplasm. The protein localises to the cytoskeleton. It localises to the perinuclear region. Functionally, actin-binding protein involved in motile and morphological processes. Inhibits actin polymerization, likely by sequestering G-actin. This is Twinfilin-2-B (twf2-b) from Xenopus laevis (African clawed frog).